The primary structure comprises 370 residues: Spermidine/putrescine import ATP-binding protein PotA (370 aa).

The 231-residue stretch at 6 to 236 (IELHQVTKRY…PINHFVADFI (231 aa)) folds into the ABC transporter domain. 38–45 (GPSGCGKT) contacts ATP.

The protein belongs to the ABC transporter superfamily. Spermidine/putrescine importer (TC 3.A.1.11.1) family. The complex is composed of two ATP-binding proteins (PotA), two transmembrane proteins (PotB and PotC) and a solute-binding protein (PotD).

It is found in the cell membrane. It catalyses the reaction ATP + H2O + polyamine-[polyamine-binding protein]Side 1 = ADP + phosphate + polyamineSide 2 + [polyamine-binding protein]Side 1.. Functionally, part of the ABC transporter complex PotABCD involved in spermidine/putrescine import. Responsible for energy coupling to the transport system. The chain is Spermidine/putrescine import ATP-binding protein PotA from Levilactobacillus brevis (strain ATCC 367 / BCRC 12310 / CIP 105137 / JCM 1170 / LMG 11437 / NCIMB 947 / NCTC 947) (Lactobacillus brevis).